Here is a 390-residue protein sequence, read N- to C-terminus: Ribosomal RNA small subunit methyltransferase H (390 aa).

Residues 47–49, Asp66, Phe93, Asp122, and Gln129 each bind S-adenosyl-L-methionine; that span reads GGH. Positions 282–390 are disordered; it reads SKTPPGLPID…SHREDVEGEQ (109 aa). Residues 305-316 show a composition bias toward basic and acidic residues; sequence GSEKADEQENNK. Residues 348-358 show a composition bias toward polar residues; sequence SGSSTTYSARS. Composition is skewed to basic and acidic residues over residues 360-372 and 381-390; these read SRHE…REHL and SHREDVEGEQ.

Belongs to the methyltransferase superfamily. RsmH family.

The protein localises to the cytoplasm. The catalysed reaction is cytidine(1402) in 16S rRNA + S-adenosyl-L-methionine = N(4)-methylcytidine(1402) in 16S rRNA + S-adenosyl-L-homocysteine + H(+). Its function is as follows. Specifically methylates the N4 position of cytidine in position 1402 (C1402) of 16S rRNA. The chain is Ribosomal RNA small subunit methyltransferase H from Corynebacterium kroppenstedtii (strain DSM 44385 / JCM 11950 / CIP 105744 / CCUG 35717).